A 436-amino-acid polypeptide reads, in one-letter code: Acetylcholine receptor non-alpha chain (436 aa).

At 1 to 195 (IIDVHEIDQI…IFYLELRRKP (195 aa)) the chain is on the extracellular side. Asn-62 is a glycosylation site (N-linked (GlcNAc...) asparagine). Residues Cys-89 and Cys-103 are joined by a disulfide bond. Asn-140 carries N-linked (GlcNAc...) asparagine glycosylation. Transmembrane regions (helical) follow at residues 196–219 (LFYT…AFYL), 227–245 (VTLC…LLLK), and 261–280 (YLLF…VISL). Residues 281-404 (NLHFRRPSTH…WKFVARVLDR (124 aa)) lie on the Cytoplasmic side of the membrane. The chain crosses the membrane as a helical span at residues 405 to 423 (LFLLLFSIACFLGTILILF).

This sequence belongs to the ligand-gated ion channel (TC 1.A.9) family. Acetylcholine receptor (TC 1.A.9.1) subfamily.

Its subcellular location is the postsynaptic cell membrane. The protein localises to the cell membrane. After binding acetylcholine, the AChR responds by an extensive change in conformation that affects all subunits and leads to opening of an ion-conducting channel across the plasma membrane. This chain is Acetylcholine receptor non-alpha chain, found in Onchocerca volvulus.